The chain runs to 99 residues: A-type ATP synthase subunit F (99 aa).

This sequence belongs to the V-ATPase F subunit family. As to quaternary structure, has multiple subunits with at least A(3), B(3), C, D, E, F, H, I and proteolipid K(x).

It is found in the cell membrane. Functionally, component of the A-type ATP synthase that produces ATP from ADP in the presence of a proton gradient across the membrane. In Methanococcus maripaludis (strain C5 / ATCC BAA-1333), this protein is A-type ATP synthase subunit F.